The sequence spans 212 residues: MGQKTHPIGFRLGVIKEWPSKWYAPKKEYSKLLHEDLKIKNYIKERYKVAGVSKVEIERIVDKVRVKIHTARPAIVIGRRGQEVENLKKTLEKMLPGKEITISVVEVRVPELDAQLVAQDIATQIERRVSHRRAMKRAIDNALKAGAKGVKVQVKGRIGGAELARKEWFLVGRMPLQTLRADIDYGFATAYTKYGILSVKVWIYKGDVLNGR.

Residues 39–108 (IKNYIKERYK…EITISVVEVR (70 aa)) form the KH type-2 domain.

This sequence belongs to the universal ribosomal protein uS3 family. Part of the 30S ribosomal subunit. Forms a tight complex with proteins S10 and S14.

Functionally, binds the lower part of the 30S subunit head. Binds mRNA in the 70S ribosome, positioning it for translation. This chain is Small ribosomal subunit protein uS3, found in Aquifex aeolicus (strain VF5).